The sequence spans 101 residues: Urinary protein 3 (101 aa).

The signal sequence occupies residues M1 to A21. Residues L22–V99 form the UPAR/Ly6 domain. Intrachain disulfides connect C24/C51, C27/C36, C43/C70, C73/C89, and C90/C96.

It is found in the secreted. This is Urinary protein 3 from Rattus norvegicus (Rat).